Consider the following 399-residue polypeptide: Succinate--CoA ligase [ADP-forming] subunit beta (399 aa).

Residues 9–254 (KQVLAKYGVP…EDEEDPMELE (246 aa)) form the ATP-grasp domain. Residues K46, 53 to 55 (GRG), E109, C112, and E117 each bind ATP. Residues N209 and D223 each coordinate Mg(2+). Residues N274 and 331–333 (GIM) contribute to the substrate site.

Belongs to the succinate/malate CoA ligase beta subunit family. Heterotetramer of two alpha and two beta subunits. The cofactor is Mg(2+).

The catalysed reaction is succinate + ATP + CoA = succinyl-CoA + ADP + phosphate. It carries out the reaction GTP + succinate + CoA = succinyl-CoA + GDP + phosphate. The protein operates within carbohydrate metabolism; tricarboxylic acid cycle; succinate from succinyl-CoA (ligase route): step 1/1. Its function is as follows. Succinyl-CoA synthetase functions in the citric acid cycle (TCA), coupling the hydrolysis of succinyl-CoA to the synthesis of either ATP or GTP and thus represents the only step of substrate-level phosphorylation in the TCA. The beta subunit provides nucleotide specificity of the enzyme and binds the substrate succinate, while the binding sites for coenzyme A and phosphate are found in the alpha subunit. This chain is Succinate--CoA ligase [ADP-forming] subunit beta, found in Rhodospirillum rubrum (strain ATCC 11170 / ATH 1.1.1 / DSM 467 / LMG 4362 / NCIMB 8255 / S1).